The primary structure comprises 600 residues: Proline--tRNA ligase (600 aa).

It belongs to the class-II aminoacyl-tRNA synthetase family. ProS type 1 subfamily. As to quaternary structure, homodimer.

The protein resides in the cytoplasm. It carries out the reaction tRNA(Pro) + L-proline + ATP = L-prolyl-tRNA(Pro) + AMP + diphosphate. Catalyzes the attachment of proline to tRNA(Pro) in a two-step reaction: proline is first activated by ATP to form Pro-AMP and then transferred to the acceptor end of tRNA(Pro). As ProRS can inadvertently accommodate and process non-cognate amino acids such as alanine and cysteine, to avoid such errors it has two additional distinct editing activities against alanine. One activity is designated as 'pretransfer' editing and involves the tRNA(Pro)-independent hydrolysis of activated Ala-AMP. The other activity is designated 'posttransfer' editing and involves deacylation of mischarged Ala-tRNA(Pro). The misacylated Cys-tRNA(Pro) is not edited by ProRS. In Prochlorococcus marinus (strain MIT 9301), this protein is Proline--tRNA ligase.